Reading from the N-terminus, the 264-residue chain is Thiazole synthase (264 aa).

Lysine 106 functions as the Schiff-base intermediate with DXP in the catalytic mechanism. 1-deoxy-D-xylulose 5-phosphate contacts are provided by residues glycine 167, 193–194 (AG), and 215–216 (NT).

Belongs to the ThiG family. Homotetramer. Forms heterodimers with either ThiH or ThiS.

The protein localises to the cytoplasm. The enzyme catalyses [ThiS sulfur-carrier protein]-C-terminal-Gly-aminoethanethioate + 2-iminoacetate + 1-deoxy-D-xylulose 5-phosphate = [ThiS sulfur-carrier protein]-C-terminal Gly-Gly + 2-[(2R,5Z)-2-carboxy-4-methylthiazol-5(2H)-ylidene]ethyl phosphate + 2 H2O + H(+). The protein operates within cofactor biosynthesis; thiamine diphosphate biosynthesis. Catalyzes the rearrangement of 1-deoxy-D-xylulose 5-phosphate (DXP) to produce the thiazole phosphate moiety of thiamine. Sulfur is provided by the thiocarboxylate moiety of the carrier protein ThiS. In vitro, sulfur can be provided by H(2)S. The chain is Thiazole synthase from Thioalkalivibrio sulfidiphilus (strain HL-EbGR7).